A 267-amino-acid chain; its full sequence is Undecaprenyl-diphosphatase (267 aa).

A run of 8 helical transmembrane segments spans residues 5-25 (TIVA…PVSS), 45-65 (FEVL…AGRL), 82-102 (ILAV…AHRI), 108-128 (FETP…LLFV), 143-163 (FPLP…IPGV), 183-203 (AAEF…VYDL), 213-233 (AATG…VVVV), and 243-263 (YGYG…LLAL).

The protein belongs to the UppP family.

Its subcellular location is the cell inner membrane. It catalyses the reaction di-trans,octa-cis-undecaprenyl diphosphate + H2O = di-trans,octa-cis-undecaprenyl phosphate + phosphate + H(+). In terms of biological role, catalyzes the dephosphorylation of undecaprenyl diphosphate (UPP). Confers resistance to bacitracin. In Paracoccus denitrificans (strain Pd 1222), this protein is Undecaprenyl-diphosphatase.